The chain runs to 610 residues: Menin (610 aa).

The tract at residues glycine 214–proline 390 is interaction with FANCD2. The segment at alanine 462 to threonine 552 is disordered. The segment covering arginine 484–leucine 500 has biased composition (basic and acidic residues). 2 positions are modified to phosphoserine: serine 487 and serine 543. Residues alanine 537–glycine 548 are compositionally biased toward pro residues. Residue threonine 594 is modified to Phosphothreonine.

In terms of assembly, component of the MLL-HCF complex, at least composed of KMT2A/MLL1, MEN1, ASH2L, RBBP5, DPY30, WDR5, HCFC1 and HCFC2. Component of the menin-associated histone methyltransferase complex, at least composed of KMT2B/MLL4, MEN1, ASH2L, RBBP5, DPY30 and WDR5. Interacts with POLR2B. Interacts with POLR2A phosphorylated at 'Ser-5', but not with the unphosphorylated, nor 'Ser-2' phosphorylated POLR2A forms. Interacts with FANCD2 and DBF4. Interacts with SMAD3, but not with SMAD2, nor SMAD4. Directly interacts with NFKB1, NFKB2 and RELA. Interacts with JUND (via MBM motif); inhibits the interaction of JUND with MAPK10 and the phosphorylation of JUND by MAP kinases MAPK8 and MAPK10. Interacts with KMT2A (via MBM motif). The KMT2A-MEN1 complex interacts with PSIP1 with a greater affinity as MEN1 enhances interaction of KMT2A with PSIP1.

The protein localises to the nucleus. In terms of biological role, essential component of a MLL/SET1 histone methyltransferase (HMT) complex, a complex that specifically methylates 'Lys-4' of histone H3 (H3K4). Functions as a transcriptional regulator. Binds to the TERT promoter and represses telomerase expression. Plays a role in TGFB1-mediated inhibition of cell-proliferation, possibly regulating SMAD3 transcriptional activity. Represses JUND-mediated transcriptional activation on AP1 sites, as well as that mediated by NFKB subunit RELA. Positively regulates HOXC8 and HOXC6 gene expression. May be involved in normal hematopoiesis through the activation of HOXA9 expression. May be involved in DNA repair. This Canis lupus familiaris (Dog) protein is Menin (MEN1).